The following is a 358-amino-acid chain: Peptide chain release factor 1 (358 aa).

Gln-234 is subject to N5-methylglutamine.

It belongs to the prokaryotic/mitochondrial release factor family. Post-translationally, methylated by PrmC. Methylation increases the termination efficiency of RF1.

Its subcellular location is the cytoplasm. Peptide chain release factor 1 directs the termination of translation in response to the peptide chain termination codons UAG and UAA. This Chloroherpeton thalassium (strain ATCC 35110 / GB-78) protein is Peptide chain release factor 1.